We begin with the raw amino-acid sequence, 793 residues long: Probable phosphoketolase 2 (793 aa).

The protein belongs to the XFP family. Thiamine diphosphate serves as cofactor.

The sequence is that of Probable phosphoketolase 2 from Nostoc sp. (strain PCC 7120 / SAG 25.82 / UTEX 2576).